The primary structure comprises 146 residues: Hemoglobin subunit beta (146 aa).

The Globin domain maps to 2–146 (HWTAEEKQLI…VAHALARKYH (145 aa)). The heme b site is built by His-63 and His-92.

It belongs to the globin family. Heterotetramer of two alpha chains and two beta chains. As to expression, red blood cells.

Functionally, involved in oxygen transport from the lung to the various peripheral tissues. The polypeptide is Hemoglobin subunit beta (HBB) (Branta canadensis (Canada goose)).